The following is a 240-amino-acid chain: Glycerol uptake facilitator protein 3 (240 aa).

2 helical membrane passes run 11-31 (LGEF…VAGV) and 41-61 (AGWV…VYAS). An NPA 1 motif is present at residues 70 to 72 (NPA). The next 3 membrane-spanning stretches (helical) occupy residues 88 to 108 (VIPY…VVWL), 137 to 157 (FWNF…LLAF), and 162 to 182 (FTAG…GLSL). Positions 191-193 (NPA) match the NPA 2 motif. A helical membrane pass occupies residues 219–239 (WVPIAGPLVGGALGALLFNVL).

This sequence belongs to the MIP/aquaporin (TC 1.A.8) family.

It localises to the cell membrane. In terms of biological role, transporter that facilitates the transmembrane diffusion of water, dihydroxyacetone, glycerol and H(2)O(2). Is not permeable to urea and D/L-lactic acid. The sequence is that of Glycerol uptake facilitator protein 3 from Lactiplantibacillus plantarum (strain ATCC BAA-793 / NCIMB 8826 / WCFS1) (Lactobacillus plantarum).